A 648-amino-acid chain; its full sequence is Protein KASH5 (648 aa).

At 1–606 the chain is on the cytoplasmic side; it reads MHSILRSSLS…HSPGIRISQH (606 aa). Residues 206 to 228 form a disordered region; it reads PEAEESANLESFGGEDPRPEGPA. Residues 230 to 420 adopt a coiled-coil conformation; that stretch reads AELLSNLEDL…EEQLSQSQEG (191 aa). Residues 473–497 show a composition bias toward acidic residues; sequence EVEPEPEPEPEPEPEPEPQEVEFPS. The tract at residues 473–545 is disordered; the sequence is EVEPEPEPEP…EESWVLADPS (73 aa). The helical; Anchor for type IV membrane protein transmembrane segment at 607–627 threads the bilayer; the sequence is PLVPTPVLGLLLLLLLSILLF. Residues 628–648 are Perinuclear space-facing; sequence SQSPPPTWPHLQLYYLQPPPV.

Core component the LINC complex which is composed of inner nuclear membrane SUN domain-containing proteins coupled to outer nuclear membrane KASH domain-containing nesprins. SUN and KASH domain-containing proteins seem to bind each other promiscuously; however, differentially expression of LINC complex constituents is giving rise to specific assemblies. At least SUN1/2-containing core LINC complexes are proposed to be hexameric composed of three protomers of each KASH and SUN domain-containing protein. Interacts with SUN1; this interaction mediates its telomere localization by forming a SUN1:KASH5 LINC complex. Component of a probable SUN2:KASH5 LINC complex. Self-associates. Interacts with DYNC1H1, DCTN1, DYNC1I1/2 and PAFAH1B1; suggesting the association with the dynein-dynactin motor complex. As to expression, restricted to the testis and the early ootidogenesis ovary. Expressed in spermatocytes and oocytes (at protein level).

The protein resides in the nucleus outer membrane. It localises to the nucleus. The protein localises to the chromosome. It is found in the telomere. Its subcellular location is the nucleus envelope. Functionally, as a component of the LINC (LInker of Nucleoskeleton and Cytoskeleton) complex, involved in the connection between the nuclear lamina and the cytoskeleton. The nucleocytoplasmic interactions established by the LINC complex play an important role in the transmission of mechanical forces across the nuclear envelope and in nuclear movement and positioning. Required for telomere attachment to nuclear envelope in the prophase of meiosis and for rapid telomere prophase movements implicating a SUN1/2:KASH5 LINC complex in which SUN1 and SUN2 seem to act at least partial redundantly. Required for homolog pairing during meiotic prophase in spermatocytes and probably oocytes. Essential for male and female gametogenesis. Recruits cytoplasmic dynein to telomere attachment sites at the nuclear envelope in spermatocytes. In oocytes is involved in meiotic resumption and spindle formation. The polypeptide is Protein KASH5 (Mus musculus (Mouse)).